We begin with the raw amino-acid sequence, 222 residues long: Large ribosomal subunit protein mL64 (222 aa).

Disordered stretches follow at residues 14–40 (LTATLAPGSRGYRAPPPPRREPGPWWP) and 188–222 (KRLKEEKQRQKQEARAAALAAAAAQDPAASGAPSS). The stretch at 144–213 (EKAQADKERR…AALAAAAAQD (70 aa)) forms a coiled coil. A Nuclear localization signal motif is present at residues 184 to 200 (KKERKRLKEEKQRQKQE). Residues 188 to 201 (KRLKEEKQRQKQEA) are compositionally biased toward basic and acidic residues. Low complexity predominate over residues 202 to 216 (RAAALAAAAAQDPAA).

The protein belongs to the mitochondrion-specific ribosomal protein mL64 family. As to quaternary structure, component of the mitochondrial ribosome large subunit (39S) which comprises a 16S rRNA and about 50 distinct proteins. Interacts with GADD45A, GADD45B and GADD45G. Interacts with NR4A1 via the NR4A1 AB domain. Interacts with ATAD3A and ATAD3B.

It is found in the mitochondrion. The protein resides in the nucleus. Functionally, acts as a negative regulator of G1 to S cell cycle phase progression by inhibiting cyclin-dependent kinases. Inhibitory effects are additive with GADD45 proteins but also occur in the absence of GADD45 proteins. Acts as a repressor of the orphan nuclear receptor NR4A1 by inhibiting AB domain-mediated transcriptional activity. May be involved in the hormone-mediated regulation of NR4A1 transcriptional activity. May play a role in mitochondrial protein synthesis. The polypeptide is Large ribosomal subunit protein mL64 (GADD45GIP1) (Chlorocebus aethiops (Green monkey)).